A 432-amino-acid polypeptide reads, in one-letter code: Serine--tRNA ligase (432 aa).

239-241 (TSE) is a binding site for L-serine. 270–272 (RSE) serves as a coordination point for ATP. Position 293 (Glu293) interacts with L-serine. Position 357-360 (357-360 (EISS)) interacts with ATP. Position 392 (Ser392) interacts with L-serine.

Belongs to the class-II aminoacyl-tRNA synthetase family. Type-1 seryl-tRNA synthetase subfamily. Homodimer. The tRNA molecule binds across the dimer.

The protein resides in the cytoplasm. The catalysed reaction is tRNA(Ser) + L-serine + ATP = L-seryl-tRNA(Ser) + AMP + diphosphate + H(+). It carries out the reaction tRNA(Sec) + L-serine + ATP = L-seryl-tRNA(Sec) + AMP + diphosphate + H(+). It functions in the pathway aminoacyl-tRNA biosynthesis; selenocysteinyl-tRNA(Sec) biosynthesis; L-seryl-tRNA(Sec) from L-serine and tRNA(Sec): step 1/1. Functionally, catalyzes the attachment of serine to tRNA(Ser). Is also able to aminoacylate tRNA(Sec) with serine, to form the misacylated tRNA L-seryl-tRNA(Sec), which will be further converted into selenocysteinyl-tRNA(Sec). In Methylibium petroleiphilum (strain ATCC BAA-1232 / LMG 22953 / PM1), this protein is Serine--tRNA ligase.